The primary structure comprises 100 residues: Small ribosomal subunit protein bS20 (100 aa).

The segment covering 1–18 has biased composition (basic and acidic residues); it reads MPNKKSAEKRVRQSEQRR. The tract at residues 1–26 is disordered; the sequence is MPNKKSAEKRVRQSEQRRQKNRGYQK.

This sequence belongs to the bacterial ribosomal protein bS20 family.

In terms of biological role, binds directly to 16S ribosomal RNA. The protein is Small ribosomal subunit protein bS20 of Petrotoga mobilis (strain DSM 10674 / SJ95).